Consider the following 483-residue polypeptide: Glutamyl-tRNA(Gln) amidotransferase subunit A (483 aa).

Catalysis depends on charge relay system residues lysine 76 and serine 151. The active-site Acyl-ester intermediate is the serine 175.

It belongs to the amidase family. GatA subfamily. As to quaternary structure, heterotrimer of A, B and C subunits.

The catalysed reaction is L-glutamyl-tRNA(Gln) + L-glutamine + ATP + H2O = L-glutaminyl-tRNA(Gln) + L-glutamate + ADP + phosphate + H(+). Its function is as follows. Allows the formation of correctly charged Gln-tRNA(Gln) through the transamidation of misacylated Glu-tRNA(Gln) in organisms which lack glutaminyl-tRNA synthetase. The reaction takes place in the presence of glutamine and ATP through an activated gamma-phospho-Glu-tRNA(Gln). This Ectopseudomonas mendocina (strain ymp) (Pseudomonas mendocina) protein is Glutamyl-tRNA(Gln) amidotransferase subunit A.